We begin with the raw amino-acid sequence, 196 residues long: Imidazoleglycerol-phosphate dehydratase (196 aa).

This sequence belongs to the imidazoleglycerol-phosphate dehydratase family.

The protein localises to the cytoplasm. The catalysed reaction is D-erythro-1-(imidazol-4-yl)glycerol 3-phosphate = 3-(imidazol-4-yl)-2-oxopropyl phosphate + H2O. It participates in amino-acid biosynthesis; L-histidine biosynthesis; L-histidine from 5-phospho-alpha-D-ribose 1-diphosphate: step 6/9. This Dehalococcoides mccartyi (strain CBDB1) protein is Imidazoleglycerol-phosphate dehydratase.